A 287-amino-acid chain; its full sequence is MKLKFTKMHGAGNDFVVLDGYTQPVNLTPAQVRALADRHFGVGADQLLLVEKPTVAGVDFRYRIFNCDGGEVEHCGNGARCFVKFVRERGLTDQRSVRVQVQKGTITLTMQENGEVLVDMGTPVFDPERVPFATKGLEGRREGADTLWPLDVSGTTRWISVVSMGNPHAVQVVGDVEAFPVLAEGPVIERHARFPQRVNAGFMQIVGRNEIRLRVYERGAGETLACGTGACAAVAAGIRRGLLDSPVRVHTHGGDLTISWDSTREGEPLLMAGPAVTVFEGEIELPD.

The substrate site is built by Asn-13, Gln-46, and Asn-66. Catalysis depends on Cys-75, which acts as the Proton donor. Substrate contacts are provided by residues 76–77 (GN), Asn-166, Asn-199, and 217–218 (ER). Cys-226 (proton acceptor) is an active-site residue. 227–228 (GT) is a substrate binding site.

The protein belongs to the diaminopimelate epimerase family. In terms of assembly, homodimer.

Its subcellular location is the cytoplasm. The catalysed reaction is (2S,6S)-2,6-diaminopimelate = meso-2,6-diaminopimelate. Its pathway is amino-acid biosynthesis; L-lysine biosynthesis via DAP pathway; DL-2,6-diaminopimelate from LL-2,6-diaminopimelate: step 1/1. Functionally, catalyzes the stereoinversion of LL-2,6-diaminopimelate (L,L-DAP) to meso-diaminopimelate (meso-DAP), a precursor of L-lysine and an essential component of the bacterial peptidoglycan. The chain is Diaminopimelate epimerase from Paraburkholderia xenovorans (strain LB400).